Consider the following 100-residue polypeptide: Probable antitoxin MazE4 (100 aa).

Residues 77–100 (PYESEAERSAARARRNARQQRSAQ) are disordered.

In terms of assembly, forms a complex with cognate toxin MazF4.

Antitoxin component of a type II toxin-antitoxin (TA) system. Labile antitoxin that binds to cognate MazF4 toxin and counteracts its endoribonuclease activity. In Mycobacterium tuberculosis (strain CDC 1551 / Oshkosh), this protein is Probable antitoxin MazE4 (mazE4).